We begin with the raw amino-acid sequence, 56 residues long: Sex-specific storage protein 1 (56 aa).

Belongs to the hemocyanin family. In terms of tissue distribution, expressed in fat body and ovary.

It is found in the secreted. Functionally, larval storage protein (LSP) which may serve as a store of amino acids for synthesis of adult proteins. The biosynthesis, accumulation and sequestration of storage protein-1 takes place during metamorphosis and saves energy for the non-feeding pupal stage. May also be essential for egg formation. The chain is Sex-specific storage protein 1 from Amsacta albistriga (Red hairy caterpillar).